The primary structure comprises 314 residues: Galectin-12 (314 aa).

2 consecutive Galectin domains span residues Tyr-27–Leu-161 and Cys-190–Cys-314.

The protein localises to the nucleus. Its function is as follows. Binds lactose. May participate in the apoptosis of adipocytes. The protein is Galectin-12 (Lgals12) of Mus musculus (Mouse).